The following is a 145-amino-acid chain: Large ribosomal subunit protein uL15 (145 aa).

Residues 1-50 are disordered; sequence MRLNTLSPAAGSKPEKQRRGRGIGSGLGKTGGRGVKGQTSRSGGGKVRAG. Residues 22–35 show a composition bias toward gly residues; that stretch reads GIGSGLGKTGGRGV.

The protein belongs to the universal ribosomal protein uL15 family. As to quaternary structure, part of the 50S ribosomal subunit.

Its function is as follows. Binds to the 23S rRNA. The sequence is that of Large ribosomal subunit protein uL15 from Aeromonas salmonicida (strain A449).